The following is a 253-amino-acid chain: MPAPALTGPQYLREGLKLILSPGLRLFVLLPLSINIVLFCGLIYLAVHQFELWVDTFMPTLPHWLSFLSYILWPLFVALVLLMVFFTFTVVANIIAAPFNGFLSEKVEAVIRGVDESPDFSWAELVAMVPRTLAREARKLGYMLPRMLGLFILSFIPVANIIAAPLWLLFGVWMMAIQYIDYPADNHKLGWNEMLGWLKSKRWQSLSFGGIVYVALLIPVVNLLMMPAAVAAATLFWVRERGADALPIAHARD.

4 helical membrane passes run 27–47, 71–91, 150–170, and 211–231; these read FVLL…YLAV, ILWP…FTVV, LFIL…WLLF, and IVYV…AAVA.

The protein belongs to the CysZ family.

It localises to the cell inner membrane. Its function is as follows. High affinity, high specificity proton-dependent sulfate transporter, which mediates sulfate uptake. Provides the sulfur source for the cysteine synthesis pathway. The protein is Sulfate transporter CysZ of Pseudomonas syringae pv. tomato (strain ATCC BAA-871 / DC3000).